A 297-amino-acid polypeptide reads, in one-letter code: MSLSGLITALATPFRADGALDPDGWQRLLHLQLEGGVHGVVVAGSTGEAATLTDAEYDLLLASAVERIGGRIPVMAGTGLSGTAKTIEQTRRAAALGASHALVVTPPYVRPTQAGLIAHYRAVADQGGLPVVLYNVPGRTGCDMQPETVAELASHPNIVGIKEAVGDTGRVQALLALRSPQFAVLSGDDGTAARSIRAGIDGLISVGSNVLPGAYRRMCELAAAHDHEATESWDARLQPFHDFCGVEPNPIPVKALLRRIGIGHDLRLPLLPLSASHHAAADHLAGDIAALEALSSH.

Thr-46 contacts pyruvate. Tyr-134 acts as the Proton donor/acceptor in catalysis. The Schiff-base intermediate with substrate role is filled by Lys-162. Ile-204 contributes to the pyruvate binding site.

The protein belongs to the DapA family. Homotetramer; dimer of dimers.

It is found in the cytoplasm. It carries out the reaction L-aspartate 4-semialdehyde + pyruvate = (2S,4S)-4-hydroxy-2,3,4,5-tetrahydrodipicolinate + H2O + H(+). Its pathway is amino-acid biosynthesis; L-lysine biosynthesis via DAP pathway; (S)-tetrahydrodipicolinate from L-aspartate: step 3/4. Its function is as follows. Catalyzes the condensation of (S)-aspartate-beta-semialdehyde [(S)-ASA] and pyruvate to 4-hydroxy-tetrahydrodipicolinate (HTPA). The protein is 4-hydroxy-tetrahydrodipicolinate synthase of Stenotrophomonas maltophilia (strain K279a).